A 697-amino-acid polypeptide reads, in one-letter code: Potassium-transporting ATPase ATP-binding subunit (697 aa).

Transmembrane regions (helical) follow at residues 55–75 (PIMF…FLPS), 82–102 (GWFN…ANFA), 245–265 (LTLI…YLGF), and 271–291 (VLVA…LSAI). The 4-aspartylphosphate intermediate role is filled by D324. ATP-binding positions include D361, E365, 393–400 (FKAETRMS), and K412. 2 residues coordinate Mg(2+): D535 and D539. Transmembrane regions (helical) follow at residues 605 to 625 (FAII…LNIM), 633 to 653 (AILS…PLAM), and 677 to 697 (GGVI…GLFI).

The protein belongs to the cation transport ATPase (P-type) (TC 3.A.3) family. Type IA subfamily. As to quaternary structure, the system is composed of three essential subunits: KdpA, KdpB and KdpC.

It localises to the cell membrane. The catalysed reaction is K(+)(out) + ATP + H2O = K(+)(in) + ADP + phosphate + H(+). Its function is as follows. Part of the high-affinity ATP-driven potassium transport (or Kdp) system, which catalyzes the hydrolysis of ATP coupled with the electrogenic transport of potassium into the cytoplasm. This subunit is responsible for energy coupling to the transport system and for the release of the potassium ions to the cytoplasm. The chain is Potassium-transporting ATPase ATP-binding subunit from Bacillus mycoides (strain KBAB4) (Bacillus weihenstephanensis).